Reading from the N-terminus, the 408-residue chain is 26S proteasome regulatory subunit 6B homolog (408 aa).

Ala-2 is modified (N-acetylalanine). Residue Ser-16 is modified to Phosphoserine. A coiled-coil region spans residues 28-75 (EDLYGRLKSLERQLEFTDIQEEYVKDEQKNLKRELLRAQEEVKRIQSV). 196 to 203 (GPPGTGKT) lines the ATP pocket.

The protein belongs to the AAA ATPase family. In terms of assembly, component of the 19S regulatory particle (RP/PA700) base subcomplex of the 26S proteasome. The 26S proteasome is composed of a core protease (CP), known as the 20S proteasome, capped at one or both ends by the 19S regulatory particle (RP/PA700). The RP/PA700 complex is composed of at least 17 different subunits in two subcomplexes, the base and the lid, which form the portions proximal and distal to the 20S proteolytic core, respectively. In terms of tissue distribution, expressed in dark-grown etiolated seedlings, roots, leaves, stems and flowers.

It is found in the cytoplasm. The protein localises to the nucleus. The 26S proteasome is involved in the ATP-dependent degradation of ubiquitinated proteins. The regulatory (or ATPase) complex confers ATP dependency and substrate specificity to the 26S complex. The chain is 26S proteasome regulatory subunit 6B homolog (RPT3) from Arabidopsis thaliana (Mouse-ear cress).